An 851-amino-acid chain; its full sequence is DNA mismatch repair protein MutS (851 aa).

602-609 (GPNMSGKS) is a binding site for ATP.

The protein belongs to the DNA mismatch repair MutS family.

Its function is as follows. This protein is involved in the repair of mismatches in DNA. It is possible that it carries out the mismatch recognition step. This protein has a weak ATPase activity. In Streptococcus pyogenes serotype M28 (strain MGAS6180), this protein is DNA mismatch repair protein MutS.